The chain runs to 100 residues: Ribosomal biogenesis factor (100 aa).

Position 19 is a phosphoserine (Ser-19). Lys-21 bears the N6-acetyllysine mark. Ser-69 is modified (phosphoserine).

Associates with the pre-60S ribosomal particles.

The protein resides in the nucleus. It localises to the nucleolus. In terms of biological role, trans-acting factor in ribosome biogenesis required for efficient 40S and 60S subunit production. This is Ribosomal biogenesis factor (RBIS) from Bos taurus (Bovine).